Reading from the N-terminus, the 448-residue chain is Vicilin Cor a 11.0101 (448 aa).

Residues 1–44 show a composition bias toward basic and acidic residues; the sequence is MLPKEDPELKKCKHKCRDERQFDEQQRRDGKQICEEKARERQQE. A disordered region spans residues 1-66; sequence MLPKEDPELK…QEENPYVFQD (66 aa). An N-linked (GlcNAc...) asparagine glycan is attached at Asn47. 2 consecutive Cupin type-1 domains span residues 84 to 220 and 263 to 418; these read ENFT…EQLE and INLL…REVE. An N-linked (GlcNAc...) asparagine glycan is attached at Asn301. Positions 333, 335, and 362 each coordinate Cu cation.

Belongs to the 7S seed storage protein family. In terms of assembly, homotrimer. Homohexamer. N-glycosylated at Asn-301 mostly with xylosylated paucimannosidic-type N-glycan MMX (an N-linked glycan with beta-1,2-xylose residue in the structure) and also with MMXF (a complex N-linked glycan with alpha-1,3-fucose and beta-1,2-xylose residues in the structure). In terms of processing, a mixture of proteolytically processed and unprocessed subunits exist. In terms of tissue distribution, expressed in seed (at protein level). Expressed in seed.

Seed storage protein. Does not have superoxide dismutase (SOD) activity. This chain is Vicilin Cor a 11.0101, found in Corylus avellana (European hazel).